The primary structure comprises 480 residues: 2-phosphoxylose phosphatase 1 (480 aa).

Over 1 to 6 (MLHRNR) the chain is Cytoplasmic. A helical; Signal-anchor for type II membrane protein transmembrane segment spans residues 7 to 27 (FLVLLALAGLLAFLSLSLQFF). Residues 28–480 (HLIPVSATKN…YYDACHGEGA (453 aa)) are Lumenal-facing. The active-site Nucleophile is His97. N-linked (GlcNAc...) asparagine glycans are attached at residues Asn194, Asn305, and Asn354. Residue Asp379 is the Proton donor of the active site.

It belongs to the histidine acid phosphatase family. As to quaternary structure, interacts with B3GAT3; the interaction increases the 2-phosphoxylose phosphatase activity of PXYLP1 during completion of linkage region formation in a B3GAT3-mediated manner.

Its subcellular location is the golgi apparatus membrane. The enzyme catalyses 3-O-[beta-D-GlcA-(1-&gt;3)-beta-D-Gal-(1-&gt;3)-beta-D-Gal-(1-&gt;4)-beta-D-2-O-P-Xyl]-L-seryl-[protein] + H2O = 3-O-(beta-D-GlcA-(1-&gt;3)-beta-D-Gal-(1-&gt;3)-beta-D-Gal-(1-&gt;4)-beta-D-Xyl)-L-seryl-[protein] + phosphate. In terms of biological role, responsible for the 2-O-dephosphorylation of xylose in the glycosaminoglycan-protein linkage region of proteoglycans thereby regulating the amount of mature glycosaminoglycan (GAG) chains. Sulfated glycosaminoglycans (GAGs), including heparan sulfate and chondroitin sulfate, are synthesized on the so-called common GAG-protein linkage region (GlcUAbeta1-3Galbeta1-3Galbeta1-4Xylbeta1-O-Ser) of core proteins, which is formed by the stepwise addition of monosaccharide residues by the respective specific glycosyltransferases. Xylose 2-O-dephosphorylation during completion of linkage region formation is a prerequisite for the initiation and efficient elongation of the repeating disaccharide region of GAG chains. The polypeptide is 2-phosphoxylose phosphatase 1 (Mus musculus (Mouse)).